We begin with the raw amino-acid sequence, 1342 residues long: MVYSYTEKKRIRKDFGKRPQVLDIPYLLSIQLDSFQKFIEQDPEGQYGLEAAFRSVFPIQSYSGNSELQYVSYRLGEPVFDVKECQIRGVTYSAPLRVKLRLVIYEREAPEGTVKDIKEQEVYMGEIPLMTDNGTFVINGTERVIVSQLHRSPGVFFDSDKGKTHSSGKVLYNARIIPYRGSWLDFEFDPKDNLFVRIDRRRKLPATIILRALNYTTEQILDLFFEKVVFEIRDNKLQMELVPERLRGETASFDIEANGKVYVEKGRRITARHIRQLEKDDIKHIEVPVEYIAGKVASKDYIDEATGELICPANMELSLDLLAKLSQSGHKRIETLFTNDLDHGPYISETVRVDPTNDRLSALVEIYRMMRPGEPPTREAAESLFENLFFSEDRYDLSAVGRMKFNRSLLRDEIEGSGILSKDDIIEVMKKLIDIRNGKGEVDDIDHLGNRRIRSVGEMAENQFRVGLVRVERAVKERLSLGDLDTLMPQDMINAKPISAAVKEFFGSSQLSQFMDQNNPLSEITHKRRISALGPGGLTRERAGFEVRDVHPTHYGRVCPIETPEGPNIGLINSLSVYAQTNEYGFLETPYRKVTDGVVTDEIHYLSAIEEGNYVIAQANSNLDENGHFVEDLVTCRSKGESSLFSRDQVDYMDVSTQQVVSVGASLIPFLEHDDANRALMGANMQRQAVPTLRADKPLVGTGMERAVAVDSGVTAVAKRGGTVQYVDASRIVIKVNEDEMYPGEAGIDIYNLTKYTRSNQNTCINQMPCVSLGEPIERGDVLADGPSTDLGELALGQNMRVAFMPWNGYNFEDSILVSERVVQEDRFTTIHIQELACVSRDTKLGPEEITADIPNVGEAALSKLDESGIVYIGAEVTGGDILVGKVTPKGETQLTPEEKLLRAIFGEKASDVKDSSLRVPNGVSGTVIDVQVFTRDGVEKDKRALEIEEMQLKQAKKDLSEELQILEAGLFSRIYAVLVAGGVEADKLDKLPRDRWLELGLTDEEKQNQLEQLAEQYDELKHEFEKKLEAKRRKITQGDDLAPGVLKIVKVYLAVKRRIQPGDKMAGRHGNKGVISKINPIEDMPHDANGTPVDIVLNPLGVPSRMNIGQILETHLGMAAKGIGDKINAMLKQQQEVAKLREFIQRAYDLGADVRQKVDLNTFSDEEVLRLAENLRKGMPIATPVFDGAKEAEIKELLQLGDLPTSGQITLFDGRTGEQFERPVTVGYMYMLKLNHLVDDKMHARSTGSYSLVTQQPLGGKAQFGGQRFGEMEVWALEAYGAAYTLQEMLTVKSDDVNGRTKMYKNIVDGNHQMEPGMPESFNVLLKEIRSLGINIELEDE.

It belongs to the RNA polymerase beta chain family. In terms of assembly, the RNAP catalytic core consists of 2 alpha, 1 beta, 1 beta' and 1 omega subunit. When a sigma factor is associated with the core the holoenzyme is formed, which can initiate transcription.

The catalysed reaction is RNA(n) + a ribonucleoside 5'-triphosphate = RNA(n+1) + diphosphate. Its function is as follows. DNA-dependent RNA polymerase catalyzes the transcription of DNA into RNA using the four ribonucleoside triphosphates as substrates. This Klebsiella pneumoniae (strain 342) protein is DNA-directed RNA polymerase subunit beta.